The primary structure comprises 209 residues: Mitochondrial import inner membrane translocase subunit Tim23 (209 aa).

Transmembrane regions (helical) follow at residues Phe-73–Val-93, Ala-125–Ile-145, and Gly-180–Ile-200.

The protein belongs to the Tim17/Tim22/Tim23 family. Component of the TIM23 complex at least composed of timm23, timm17 and timm50. The complex interacts with the timm44 component of the PAM complex.

Its subcellular location is the mitochondrion inner membrane. Functionally, essential component of the TIM23 complex, a complex that mediates the translocation of transit peptide-containing proteins across the mitochondrial inner membrane. This chain is Mitochondrial import inner membrane translocase subunit Tim23 (timm23), found in Xenopus tropicalis (Western clawed frog).